The sequence spans 61 residues: Metallothionein-2 (61 aa).

Methionine 1 is modified (N-acetylmethionine). Residues 1 to 29 (MDPNCSCVAGDSCTCAGSCKCKECKCTSC) form a beta region. A divalent metal cation contacts are provided by cysteine 5, cysteine 7, cysteine 13, cysteine 15, cysteine 19, cysteine 21, cysteine 24, cysteine 26, cysteine 29, cysteine 33, cysteine 34, cysteine 36, cysteine 37, cysteine 41, cysteine 44, cysteine 48, cysteine 50, cysteine 57, cysteine 59, and cysteine 60. Positions 20–25 (KCKECK) are antigenic epitope. An alpha region spans residues 30–61 (KKSCCSCCPVGCAKCAQGCICKGASDKCNCCA).

It belongs to the metallothionein superfamily. Type 1 family.

Metallothioneins have a high content of cysteine residues that bind various heavy metals; these proteins are transcriptionally regulated by both heavy metals and glucocorticoids. The sequence is that of Metallothionein-2 (MT2) from Macaca fascicularis (Crab-eating macaque).